The primary structure comprises 262 residues: MLICNDNLNQKTLLEEIMALRPWRKGPFEISKIKIDSEWDSSIKWDLVKNATSLKDKIVADVGCNNGYYLFKMLEHGPKSLVGFDPGVLVKKQFEFLAPFFDKEKKIIYKSLGVEDLNEKYPNAFDVIFCLGVLYHRKSPLETLKALYHALKIGGELVLDTLIIDSPLDIALCPKKTYAKMKNAYFIPSISALKGWCERVGFGDFEIISVLKTTPKEQRKTDFILGQSLEDFLDKKDHSKTLEGYDAPLRGYFKMLKSSSKR.

Residues Lys-25, Trp-39, Lys-44, Gly-63, 114–115 (VE), Tyr-135, and Arg-250 contribute to the carboxy-S-adenosyl-L-methionine site.

Belongs to the class I-like SAM-binding methyltransferase superfamily. CmoB family. Homotetramer.

It catalyses the reaction carboxy-S-adenosyl-L-methionine + 5-hydroxyuridine(34) in tRNA = 5-carboxymethoxyuridine(34) in tRNA + S-adenosyl-L-homocysteine + H(+). Functionally, catalyzes carboxymethyl transfer from carboxy-S-adenosyl-L-methionine (Cx-SAM) to 5-hydroxyuridine (ho5U) to form 5-carboxymethoxyuridine (cmo5U) at position 34 in tRNAs. This is tRNA U34 carboxymethyltransferase from Helicobacter acinonychis (strain Sheeba).